We begin with the raw amino-acid sequence, 298 residues long: ATP synthase F(1) complex subunit gamma, mitochondrial (298 aa).

A mitochondrion-targeting transit peptide spans 1 to 25; it reads MFSRAGVAGLSAWTLQPQWIQVRNM. An N6-acetyllysine modification is found at K39. An N6-succinyllysine modification is found at K49. K55 bears the N6-acetyllysine mark. K115 carries the N6-acetyllysine; alternate modification. At K115 the chain carries N6-succinyllysine; alternate. At S146 the chain carries Phosphoserine. K154 is modified (N6-acetyllysine; alternate). K154 carries the N6-succinyllysine; alternate modification. K197 bears the N6-acetyllysine mark. The residue at position 270 (K270) is an N6-succinyllysine.

It belongs to the ATPase gamma chain family. As to quaternary structure, component of the ATP synthase complex composed at least of ATP5F1A/subunit alpha, ATP5F1B/subunit beta, ATP5MC1/subunit c (homooctomer), MT-ATP6/subunit a, MT-ATP8/subunit 8, ATP5ME/subunit e, ATP5MF/subunit f, ATP5MG/subunit g, ATP5MK/subunit k, ATP5MJ/subunit j, ATP5F1C/subunit gamma, ATP5F1D/subunit delta, ATP5F1E/subunit epsilon, ATP5PF/subunit F6, ATP5PB/subunit b, ATP5PD/subunit d, ATP5PO/subunit OSCP. ATP synthase complex consists of a soluble F(1) head domain (subunits alpha(3) and beta(3)) - the catalytic core - and a membrane F(0) domain - the membrane proton channel (subunits c, a, 8, e, f, g, k and j). These two domains are linked by a central stalk (subunits gamma, delta, and epsilon) rotating inside the F1 region and a stationary peripheral stalk (subunits F6, b, d, and OSCP). Interacts with FLVCR2; this interaction occurs in the absence of heme and is disrupted upon heme binding.

The protein resides in the mitochondrion inner membrane. Its function is as follows. Subunit gamma, of the mitochondrial membrane ATP synthase complex (F(1)F(0) ATP synthase or Complex V) that produces ATP from ADP in the presence of a proton gradient across the membrane which is generated by electron transport complexes of the respiratory chain. ATP synthase complex consist of a soluble F(1) head domain - the catalytic core - and a membrane F(1) domain - the membrane proton channel. These two domains are linked by a central stalk rotating inside the F(1) region and a stationary peripheral stalk. During catalysis, ATP synthesis in the catalytic domain of F(1) is coupled via a rotary mechanism of the central stalk subunits to proton translocation. In vivo, can only synthesize ATP although its ATP hydrolase activity can be activated artificially in vitro. With the central stalk subunit delta, is essential for the biogenesis of F(1) catalytic part of the ATP synthase complex namely in the formation of F1 assembly intermediate. The protein is ATP synthase F(1) complex subunit gamma, mitochondrial of Macaca fascicularis (Crab-eating macaque).